Reading from the N-terminus, the 826-residue chain is Golgin subfamily A member 6-like protein 25 (826 aa).

Disordered regions lie at residues 1–100 (MWPQ…HQEA), 297–327 (QEQE…MRRQ), 345–425 (MHEQ…EMWR), 502–534 (QEEM…MWRQ), 547–646 (RQEE…EQEE), and 658–826 (QEEM…MQEH). Residues 31-52 (MSKETRQSKLAEAKEQLTDHHP) are compositionally biased toward basic and acidic residues. Composition is skewed to polar residues over residues 53–63 (QTNPSVGTAAS) and 71–83 (NNGT…TSGG). Positions 86 to 100 (SPEDEQKASHQHQEA) are enriched in basic and acidic residues. The stretch at 157–822 (LEQALSAVAT…EVRLRQQEEK (666 aa)) forms a coiled coil. 2 stretches are compositionally biased toward basic and acidic residues: residues 658–678 (QEEM…KMWE) and 686–826 (QEEK…MQEH).

The protein belongs to the GOLGA6 family.

The polypeptide is Golgin subfamily A member 6-like protein 25 (Homo sapiens (Human)).